The sequence spans 624 residues: Bifunctional protein ArgH (624 aa).

The segment at 1 to 466 is argininosuccinate lyase; the sequence is MALWGGRFTQ…AARDTTLVKV (466 aa). Residues 464–614 form the N-acetyltransferase domain; it reads VKVRPARITD…DEVALEFNLS (151 aa). The probable acetyltransferase stretch occupies residues 467-624; it reads RPARITDIET…EQIISQVKVA (158 aa).

It in the N-terminal section; belongs to the lyase 1 family. Argininosuccinate lyase subfamily.

Its subcellular location is the cytoplasm. The catalysed reaction is 2-(N(omega)-L-arginino)succinate = fumarate + L-arginine. It functions in the pathway amino-acid biosynthesis; L-arginine biosynthesis; L-arginine from L-ornithine and carbamoyl phosphate: step 3/3. This chain is Bifunctional protein ArgH (argH), found in Vibrio vulnificus (strain CMCP6).